Here is a 336-residue protein sequence, read N- to C-terminus: Aldo-keto reductase str7 (336 aa).

D57 contacts NADP(+). Residue Y62 is the Proton donor of the active site. A substrate-binding site is contributed by H124. Residues 154–155 (SE), Q174, 206–220 (SPLG…YKSP), and 283–291 (KKIKYLEEN) each bind NADP(+).

It belongs to the aldo/keto reductase family. Aldo/keto reductase 2 subfamily.

It participates in mycotoxin biosynthesis. Aldo-keto reductase; part of the gene cluster that mediates the biosynthesis of strobilurin A, an antifungal polyketide that contains a key beta-methoxyacrylate toxophore that targets the complex III of the mitochondrial electron transport chain. Strobilurin biosynthesis begins with construction of benzoyl CoA by step-wise elimination of ammonia from phenylalanine by the phenylalanine ammonia-lyase str11, oxygenation by str8 and retro-Claisen reaction to form benzoic acid, which is activated to its CoA thiolester benzoyl CoA by the dedicated CoA ligase str10. Benzoyl CoA forms the starter unit for the highly reducing polyketide synthase stpks1 that produces the polyketide prestrobilutin A. The FAD-dependent oxygenase str9 then catalyzes the key oxidative rearrangement responsible for the creation of the beta-methoxyacrylate toxophore. Str9 performs epoxidation of the 2,3 olefin of prestrobilutin A, followed by Meinwald rearrangement to furnish the aldehyde intermediate. Rapid enolization of the aldehyde intermediate would give the beta-methoxyacrylate skeleton and methylations catalyzed by str2 and str3 complete the synthesis and lead to the production of strobilurin A. The short-chain dehydrogenase stl2 and the dehydrogenase str4 play a role in the shunt pathway leading to the production of bolineol. The cluster encodes no obvious halogenase gene that could be involved in production of strobilurin B, nor any obvious dimethylallyl-transferase that could be involved in the production of strobilurin G. It is possible that unknown proteins encoded in, or near, the cluster (such as str1 or stl1) may form new classes of halogenases or dimethylally-transferases, or that the responsible genes are located elsewhere on the genome. Similarly, proteins encoded by str5/str6 hydrolases appear to have no chemical role in the biosynthesis of strobilurin A. Finally, no obvious self-resistance gene is found within the cluster. This is Aldo-keto reductase str7 from Strobilurus tenacellus.